The primary structure comprises 352 residues: Inhibin beta C chain (352 aa).

Residues 1–18 form the signal peptide; sequence MASSLLLALLFLTPTTVV. A propeptide spanning residues 19–236 is cleaved from the precursor; sequence NPKTEGPCPA…VEGKHRVRRR (218 aa). Asparagine 111, asparagine 143, asparagine 161, and asparagine 173 each carry an N-linked (GlcNAc...) asparagine glycan. Cystine bridges form between cysteine 240/cysteine 248, cysteine 247/cysteine 317, cysteine 276/cysteine 349, and cysteine 280/cysteine 351.

This sequence belongs to the TGF-beta family. As to quaternary structure, homodimeric or heterodimeric through association with alpha and beta subunits, linked by one or more disulfide bonds. Inhibins are heterodimers of one alpha and one beta subunit. Activins are homo- or heterodimers of beta subunits only. In terms of tissue distribution, mainly expressed in the adult liver.

The protein resides in the secreted. Its function is as follows. Inhibins and activins inhibit and activate, respectively, the secretion of follitropin by the pituitary gland. Inhibins/activins are involved in regulating a number of diverse functions such as hypothalamic and pituitary hormone secretion, gonadal hormone secretion, germ cell development and maturation, erythroid differentiation, insulin secretion, nerve cell survival, embryonic axial development or bone growth, depending on their subunit composition. Inhibins appear to oppose the functions of activins. This Mus musculus (Mouse) protein is Inhibin beta C chain (Inhbc).